The following is a 186-amino-acid chain: Ribosome-recycling factor (186 aa).

This sequence belongs to the RRF family.

It localises to the cytoplasm. Functionally, responsible for the release of ribosomes from messenger RNA at the termination of protein biosynthesis. May increase the efficiency of translation by recycling ribosomes from one round of translation to another. The sequence is that of Ribosome-recycling factor from Beijerinckia indica subsp. indica (strain ATCC 9039 / DSM 1715 / NCIMB 8712).